We begin with the raw amino-acid sequence, 276 residues long: Caspase-6 (276 aa).

The propeptide occupies 1 to 5 (MTETD). Residues 25–27 (KRR) form a tri-arginine exosite region. Ser62 is subject to Phosphoserine. Residue His104 is part of the active site. A 130's region region spans residues 108 to 125 (NHVYAYDAKIEIQTLTGL). Cys146 is an active-site residue. The propeptide occupies 163 to 175 (HQTDKLDNVTQVD). Ser239 carries the post-translational modification Phosphoserine. S-palmitoyl cysteine attachment occurs at residues Cys246 and Cys259.

This sequence belongs to the peptidase C14A family. Heterotetramer that consists of two anti-parallel arranged heterodimers, each one formed by a 18 kDa (p18) and a 11 kDa (p11) subunit. Interacts with BIRC6/bruce. Interacts with RIPK3. As to quaternary structure, heterotetramer that consists of two anti-parallel arranged heterodimers, each one formed by a 18 kDa (Caspase-6 subunit p18) and a 11 kDa (Caspase-6 subunit p11) subunit. Phosphorylated by NUAK1; phosphorylation inhibits self-activation. Phosphorylation at Ser-239 by AMP-activated protein kinase (PRKAA1 or PRKAA2) inhibits autocleavage, preventing caspase activation, thereby preventing hepatocyte apoptosis. Post-translationally, palmitoylation by ZDHHC17 blocks dimerization and subsequent activation, leading to inhibit the cysteine protease activity. In terms of processing, can be cleaved and activated by different caspases, depending on the context. Cleaved and activated by caspase-8 (CASP8) and subsequently by caspase-3 (CASP3). Can also undergo autoactivation by mediating autocleavage at Asp-162 and Asp-175, while it is not able to cleave its N-terminal disordered prodomain. Cleaved and activated by CASP1, possibly in the context of inflammation. Highly expressed in lung, liver, kidney, testis, and heart. Lower levels in spleen, skeletal muscle and brain. Expressed in neurons.

The protein localises to the cytoplasm. Its subcellular location is the nucleus. The catalysed reaction is Strict requirement for Asp at position P1 and has a preferred cleavage sequence of Val-Glu-His-Asp-|-.. During activation, the N-terminal disordered prodomain is removed by cleavage. Concomitantly, double cleavage gives rise to a large 18-kDa and a small 11-kDa subunit. The two large and two small subunits then assemble to form the active CASP6 complex. Can be cleaved and activated by different caspases, depending on the context. Cleaved and activated by caspase-8 (CASP8) and subsequently by caspase-3 (CASP3). Can also undergo autoactivation by mediating autocleavage at Asp-162 and Asp-175, while it is not able to cleave its N-terminal disordered prodomain. Intramolecular cleavage at Asp-175 is a prerequisite for CASP6 self-activation. Cleaved and activated by CASP1 in neurons, possibly in the context of inflammation. Phosphorylation at Ser-239 inhibits autocleavage, preventing caspase activation. In terms of biological role, cysteine protease that plays essential roles in programmed cell death, axonal degeneration, development and innate immunity. Acts as a non-canonical executioner caspase during apoptosis: localizes in the nucleus and cleaves the nuclear structural protein NUMA1 and lamin A/LMNA thereby inducing nuclear shrinkage and fragmentation. Lamin-A/LMNA cleavage is required for chromatin condensation and nuclear disassembly during apoptotic execution. Acts as a regulator of liver damage by promoting hepatocyte apoptosis: in absence of phosphorylation by AMP-activated protein kinase (AMPK), catalyzes cleavage of BID, leading to cytochrome c release, thereby participating in nonalcoholic steatohepatitis. Cleaves PARK7/DJ-1 in cells undergoing apoptosis. Involved in intrinsic apoptosis by mediating cleavage of RIPK1. Furthermore, cleaves many transcription factors such as NF-kappa-B and cAMP response element-binding protein/CREBBP. Cleaves phospholipid scramblase proteins XKR4 and XKR9. In addition to apoptosis, involved in different forms of programmed cell death. Plays an essential role in defense against viruses by acting as a central mediator of the ZBP1-mediated pyroptosis, apoptosis, and necroptosis (PANoptosis), independently of its cysteine protease activity. PANoptosis is a unique inflammatory programmed cell death, which provides a molecular scaffold that allows the interactions and activation of machinery required for inflammasome/pyroptosis, apoptosis and necroptosis. Mechanistically, interacts with RIPK3 and enhances the interaction between RIPK3 and ZBP1, leading to ZBP1-mediated inflammasome activation and cell death. Plays an essential role in axon degeneration during axon pruning which is the remodeling of axons during neurogenesis but not apoptosis. Regulates B-cell programs both during early development and after antigen stimulation. (Microbial infection) Proteolytically cleaves the N protein of coronaviruses. The cleavage leads to two fragments and modulates coronavirus replication by regulating IFN signaling. The two fragments produced by the cleavage interact with IRF3 inhibiting its nuclear translocation after activation and reduce the expression of IFNB and IFN-stimulated genes. The sequence is that of Caspase-6 from Mus musculus (Mouse).